We begin with the raw amino-acid sequence, 269 residues long: Formamidopyrimidine-DNA glycosylase (269 aa).

Proline 2 acts as the Schiff-base intermediate with DNA in catalysis. Glutamate 3 (proton donor) is an active-site residue. Residue lysine 58 is the Proton donor; for beta-elimination activity of the active site. DNA contacts are provided by histidine 91, arginine 110, and lysine 150. The FPG-type zinc finger occupies 235–269 (SVYGCKNKKCYRCKGIIIKFVQNQRSTFYCKKCQT). Arginine 259 serves as the catalytic Proton donor; for delta-elimination activity.

Belongs to the FPG family. As to quaternary structure, monomer. Zn(2+) is required as a cofactor.

It catalyses the reaction Hydrolysis of DNA containing ring-opened 7-methylguanine residues, releasing 2,6-diamino-4-hydroxy-5-(N-methyl)formamidopyrimidine.. The enzyme catalyses 2'-deoxyribonucleotide-(2'-deoxyribose 5'-phosphate)-2'-deoxyribonucleotide-DNA = a 3'-end 2'-deoxyribonucleotide-(2,3-dehydro-2,3-deoxyribose 5'-phosphate)-DNA + a 5'-end 5'-phospho-2'-deoxyribonucleoside-DNA + H(+). In terms of biological role, involved in base excision repair of DNA damaged by oxidation or by mutagenic agents. Acts as a DNA glycosylase that recognizes and removes damaged bases. Has a preference for oxidized purines, such as 7,8-dihydro-8-oxoguanine (8-oxoG). Has AP (apurinic/apyrimidinic) lyase activity and introduces nicks in the DNA strand. Cleaves the DNA backbone by beta-delta elimination to generate a single-strand break at the site of the removed base with both 3'- and 5'-phosphates. In Vesicomyosocius okutanii subsp. Calyptogena okutanii (strain HA), this protein is Formamidopyrimidine-DNA glycosylase.